The following is a 194-amino-acid chain: NADH-quinone oxidoreductase subunit B 1 (194 aa).

Polar residues predominate over residues 1 to 12 (MGVTPVSNQPLV). Residues 1-23 (MGVTPVSNQPLVAQQPKGIIDPS) are disordered. [4Fe-4S] cluster is bound by residues C73, C74, C138, and C168.

The protein belongs to the complex I 20 kDa subunit family. In terms of assembly, NDH-1 is composed of 14 different subunits. Subunits NuoB, C, D, E, F, and G constitute the peripheral sector of the complex. The cofactor is [4Fe-4S] cluster.

The protein resides in the cell inner membrane. The enzyme catalyses a quinone + NADH + 5 H(+)(in) = a quinol + NAD(+) + 4 H(+)(out). NDH-1 shuttles electrons from NADH, via FMN and iron-sulfur (Fe-S) centers, to quinones in the respiratory chain. The immediate electron acceptor for the enzyme in this species is believed to be ubiquinone. Couples the redox reaction to proton translocation (for every two electrons transferred, four hydrogen ions are translocated across the cytoplasmic membrane), and thus conserves the redox energy in a proton gradient. The chain is NADH-quinone oxidoreductase subunit B 1 from Rhizobium etli (strain ATCC 51251 / DSM 11541 / JCM 21823 / NBRC 15573 / CFN 42).